We begin with the raw amino-acid sequence, 302 residues long: Putative gluconeogenesis factor (302 aa).

It belongs to the gluconeogenesis factor family.

The protein localises to the cytoplasm. Required for morphogenesis under gluconeogenic growth conditions. The chain is Putative gluconeogenesis factor (ybhK) from Salmonella typhimurium (strain LT2 / SGSC1412 / ATCC 700720).